A 433-amino-acid chain; its full sequence is MPTAVIESLDHEGRGIARVEGKAVFIEGGLPGETVEYRVLRSKPNYEQAEATRIVRRSALRVAPRCPHFGVCGGCSMQHLDTLAQAATKQRVLEDALWRIGKVKPGIIYSAIQGPAWGYRYRARLGVRLVPAKGGVLIGFHERRSSYIADLGVCPVLPAHVSALLPALKVLVASLSIADRLPQIEVAVSEATTVLVFRNLLALKKADEAQLRSFAETHGVQVWLQPEGPDSIVPLHPRSGPGLTYTLPEFDVALDFRATDFTQVNVHINRLLIRRAMQLLQPAPGERIADLFCGLGNFSLPIARRGATVVGVEGSEALVARALENARRNGLDSRTEFHAANLFDATEDSLAALGPLDKLLIDPPREGAIAVVKAVGPAQQPARIVYVSCNPATLARDAAVLVHEKGYVLRGAGIANMFPQTSHVESIALFERP.

Positions 1-53 constitute a TRAM domain; sequence MPTAVIESLDHEGRGIARVEGKAVFIEGGLPGETVEYRVLRSKPNYEQAEATR. [4Fe-4S] cluster contacts are provided by C66, C72, C75, and C154. Residues Q263, F292, N297, E313, N341, and D362 each coordinate S-adenosyl-L-methionine. The active-site Nucleophile is the C389.

This sequence belongs to the class I-like SAM-binding methyltransferase superfamily. RNA M5U methyltransferase family. RlmD subfamily.

It carries out the reaction uridine(1939) in 23S rRNA + S-adenosyl-L-methionine = 5-methyluridine(1939) in 23S rRNA + S-adenosyl-L-homocysteine + H(+). In terms of biological role, catalyzes the formation of 5-methyl-uridine at position 1939 (m5U1939) in 23S rRNA. This is 23S rRNA (uracil(1939)-C(5))-methyltransferase RlmD from Azoarcus sp. (strain BH72).